Reading from the N-terminus, the 464-residue chain is Cysteine--tRNA ligase (464 aa).

Cys32 serves as a coordination point for Zn(2+). Residues 34–44 (VTVYDDCHIGH) carry the 'HIGH' region motif. Positions 213, 238, and 242 each coordinate Zn(2+). A 'KMSKS' region motif is present at residues 270-274 (KMSKS). Position 273 (Lys273) interacts with ATP.

It belongs to the class-I aminoacyl-tRNA synthetase family. In terms of assembly, monomer. Zn(2+) serves as cofactor.

It localises to the cytoplasm. The catalysed reaction is tRNA(Cys) + L-cysteine + ATP = L-cysteinyl-tRNA(Cys) + AMP + diphosphate. The polypeptide is Cysteine--tRNA ligase (Francisella tularensis subsp. holarctica (strain LVS)).